The sequence spans 69 residues: Large ribosomal subunit protein uL29 (69 aa).

The protein belongs to the universal ribosomal protein uL29 family.

This chain is Large ribosomal subunit protein uL29, found in Staphylococcus aureus (strain Mu3 / ATCC 700698).